The sequence spans 211 residues: Protein-L-isoaspartate O-methyltransferase (211 aa).

Ser-62 is a catalytic residue.

The protein belongs to the methyltransferase superfamily. L-isoaspartyl/D-aspartyl protein methyltransferase family.

Its subcellular location is the cytoplasm. It catalyses the reaction [protein]-L-isoaspartate + S-adenosyl-L-methionine = [protein]-L-isoaspartate alpha-methyl ester + S-adenosyl-L-homocysteine. Catalyzes the methyl esterification of L-isoaspartyl residues in peptides and proteins that result from spontaneous decomposition of normal L-aspartyl and L-asparaginyl residues. It plays a role in the repair and/or degradation of damaged proteins. The sequence is that of Protein-L-isoaspartate O-methyltransferase from Shewanella amazonensis (strain ATCC BAA-1098 / SB2B).